The sequence spans 765 residues: Carboxysome assembly protein CsoS2 (765 aa).

Over residues 1-22 the composition is skewed to basic and acidic residues; the sequence is MSTKTSREIALERRKAMSDGGK. 2 disordered regions span residues 1–107 and 165–229; these read MSTK…RTDV and REAQ…NKNG. The interval 1 to 215 is N-terminal domain; that stretch reads MSTKTSREIA…RSKTGSTSKQ (215 aa). The stretch at 7-22 is one N-repeat 1 repeat; it reads REIALERRKAMSDGGK. A compositionally biased stretch (polar residues) spans 38-63; the sequence is SQDINSTGATSSNKKVLTSPSKSNIP. Residues 77-87 show a composition bias toward basic and acidic residues; it reads SSKELGIERRK. N-repeat repeat units follow at residues 79-94, 158-173, and 196-211; these read KELG…THGK, RDIV…KHGK, and REIS…KTGS. Basic and acidic residues predominate over residues 187 to 207; it reads RRGDPDLSSREISQRVRELRS. Positions 216–586 are middle region; it reads GNGKCRPCGP…LSNCETPPND (371 aa). M-repeat repeat units follow at residues 240–289, 300–349, 358–397, 411–460, 470–519, and 530–580; these read KVGK…GQFC, RASV…KKYC, KVMQ…GDQY, KVGS…EKFC, KVGL…NDNC, and RATV…LSNC. Disordered stretches follow at residues 306–328 and 367–413; these read TTSG…GDEP and GLKV…EKVG. Positions 589–734 are C-terminal domain; sequence YANQEKSASN…AMPPVDNKRN (146 aa). C-repeat repeat units lie at residues 604 to 648 and 677 to 711; these read SVNS…GTEQ and KKEP…EGVS. 2 disordered regions span residues 611 to 637 and 656 to 765; these read EKYS…GPFD and NMTY…GARG. The span at 730-741 shows a compositional bias: basic and acidic residues; sequence DNKRNDETEKPD. The tract at residues 735-765 is C-terminal peptide; that stretch reads DETEKPDFLITGSSGNTRDGQLVTFSGGARG.

The protein belongs to the CsoS2 family. Probably interacts with the carboxysome major shell protein CsoS1 via the N-terminal domain. A CsoS1-CsoS1D-CsoS2 complex can be isolated following expression in E.coli. Interacts via its N-terminal repeats with RuBisCO. Post-translationally, unlike H.neapolitanus and predictions for P.marinus strain MIT 9313, this protein is not thought to have ribosomal frameshifting.

Its subcellular location is the carboxysome. Required for alpha-carboxysome (Cb) assembly, mediates interaction between RuBisCO and the Cb shell. The protein is probably highly flexible. The C-terminal repeats act as the encapsulation signal to target proteins to the Cb; they are necessary and sufficient to target both CsoS2 and foreign proteins to the Cb. The N-terminal repeats of this protein bind simultaneously to both subunits of RuBisCO. Probably also interacts with the major shell proteins (CsoS1); that interaction would increase the local concentration of CsoS2 so that it can condense RuBisCO and full carboxysomes can be formed. There are estimated to be 163 CsoS2 proteins per carboxysome; unlike H.neapolitanus only 1 form is seen. The polypeptide is Carboxysome assembly protein CsoS2 (Prochlorococcus marinus subsp. pastoris (strain CCMP1986 / NIES-2087 / MED4)).